A 338-amino-acid polypeptide reads, in one-letter code: Methionine synthase (338 aa).

Residues histidine 210, cysteine 212, glutamate 234, and cysteine 294 each contribute to the Zn(2+) site.

Belongs to the archaeal MetE family. The cofactor is Zn(2+).

It participates in amino-acid biosynthesis; L-methionine biosynthesis via de novo pathway. Its function is as follows. Catalyzes the transfer of a methyl group to L-homocysteine resulting in methionine formation. The physiological methyl donor is unknown. This is Methionine synthase from Pyrococcus horikoshii (strain ATCC 700860 / DSM 12428 / JCM 9974 / NBRC 100139 / OT-3).